We begin with the raw amino-acid sequence, 418 residues long: MTRKDDESDQFFCSFCGKNQKEVKKLIAGPSVYICNECVSLCEEIIEDEDKESLAPAEASDKKLTPREIKDVLDTYVIEQDRAKKVLSVAVYNHYKRLDAEVKSEDDVEIQKSNILLIGPTGCGKTLLAQTLARFLDVPFALADATTLTEAGYVGEDVENIILSLVQNADYDIEKAQRGIIYIDEVDKISQRGDNPSITRDVSGEGVQQALLKIIEGTTASIPPKGGRKHPQQDFVKVETSNILFVCGGTFTGLEKVIERRISQKSMGFGAEVQSRKEKNVGELLEQLKPEDLIKFGLIPEFLGRLPVVTSLSELNEASLVKILTEPKNALLKQYQRLFEFENVKLTFTEEALAAMAKEAVTRRSGARGLRAIMEETMLDIMYELPSTENVRECIVGEEVVLKHEPPILLFEQAKKQA.

The ClpX-type ZB domain occupies 1–54; sequence MTRKDDESDQFFCSFCGKNQKEVKKLIAGPSVYICNECVSLCEEIIEDEDKESL. Cysteine 13, cysteine 16, cysteine 35, and cysteine 38 together coordinate Zn(2+). 120-127 is an ATP binding site; it reads PTGCGKTL.

It belongs to the ClpX chaperone family. As to quaternary structure, component of the ClpX-ClpP complex. Forms a hexameric ring that, in the presence of ATP, binds to fourteen ClpP subunits assembled into a disk-like structure with a central cavity, resembling the structure of eukaryotic proteasomes.

ATP-dependent specificity component of the Clp protease. It directs the protease to specific substrates. Can perform chaperone functions in the absence of ClpP. The chain is ATP-dependent Clp protease ATP-binding subunit ClpX from Desulforapulum autotrophicum (strain ATCC 43914 / DSM 3382 / VKM B-1955 / HRM2) (Desulfobacterium autotrophicum).